Reading from the N-terminus, the 313-residue chain is tRNA dimethylallyltransferase (313 aa).

Residue 11 to 18 (GPTACGKT) coordinates ATP. 13–18 (TACGKT) is a binding site for substrate. Interaction with substrate tRNA stretches follow at residues 36–39 (DSAL), 160–164 (QRIGR), and 243–248 (RCVGYR).

This sequence belongs to the IPP transferase family. As to quaternary structure, monomer. Mg(2+) is required as a cofactor.

It catalyses the reaction adenosine(37) in tRNA + dimethylallyl diphosphate = N(6)-dimethylallyladenosine(37) in tRNA + diphosphate. Catalyzes the transfer of a dimethylallyl group onto the adenine at position 37 in tRNAs that read codons beginning with uridine, leading to the formation of N6-(dimethylallyl)adenosine (i(6)A). This is tRNA dimethylallyltransferase from Neisseria gonorrhoeae (strain NCCP11945).